Consider the following 265-residue polypeptide: Hydroxyethylthiazole kinase (265 aa).

Position 50 (Met-50) interacts with substrate. ATP is bound by residues Arg-125 and Thr-171. Gly-198 lines the substrate pocket.

The protein belongs to the Thz kinase family. The cofactor is Mg(2+).

The enzyme catalyses 5-(2-hydroxyethyl)-4-methylthiazole + ATP = 4-methyl-5-(2-phosphooxyethyl)-thiazole + ADP + H(+). The protein operates within cofactor biosynthesis; thiamine diphosphate biosynthesis; 4-methyl-5-(2-phosphoethyl)-thiazole from 5-(2-hydroxyethyl)-4-methylthiazole: step 1/1. Catalyzes the phosphorylation of the hydroxyl group of 4-methyl-5-beta-hydroxyethylthiazole (THZ). The sequence is that of Hydroxyethylthiazole kinase from Salmonella paratyphi B (strain ATCC BAA-1250 / SPB7).